The sequence spans 265 residues: Hydroxyethylthiazole kinase (265 aa).

M50 provides a ligand contact to substrate. Residues R125 and T171 each contribute to the ATP site. Residue G198 participates in substrate binding.

This sequence belongs to the Thz kinase family. It depends on Mg(2+) as a cofactor.

The enzyme catalyses 5-(2-hydroxyethyl)-4-methylthiazole + ATP = 4-methyl-5-(2-phosphooxyethyl)-thiazole + ADP + H(+). Its pathway is cofactor biosynthesis; thiamine diphosphate biosynthesis; 4-methyl-5-(2-phosphoethyl)-thiazole from 5-(2-hydroxyethyl)-4-methylthiazole: step 1/1. Functionally, catalyzes the phosphorylation of the hydroxyl group of 4-methyl-5-beta-hydroxyethylthiazole (THZ). This Salmonella typhimurium (strain LT2 / SGSC1412 / ATCC 700720) protein is Hydroxyethylthiazole kinase.